We begin with the raw amino-acid sequence, 482 residues long: tRNA modification GTPase MnmE (482 aa).

(6S)-5-formyl-5,6,7,8-tetrahydrofolate is bound by residues arginine 25, glutamate 82, and lysine 135. The TrmE-type G domain occupies 231–404 (GIKVVIAGQP…LRRVLLDIAG (174 aa)). Asparagine 241 contacts K(+). Residues 241–246 (NAGKSS), 260–266 (TPIAGTT), 285–288 (DTAG), and 385–387 (SAR) each bind GTP. Serine 245 provides a ligand contact to Mg(2+). Residues threonine 260, isoleucine 262, and threonine 265 each coordinate K(+). Threonine 266 provides a ligand contact to Mg(2+). Lysine 482 is a binding site for (6S)-5-formyl-5,6,7,8-tetrahydrofolate.

It belongs to the TRAFAC class TrmE-Era-EngA-EngB-Septin-like GTPase superfamily. TrmE GTPase family. Homodimer. Heterotetramer of two MnmE and two MnmG subunits. Requires K(+) as cofactor.

The protein resides in the cytoplasm. Exhibits a very high intrinsic GTPase hydrolysis rate. Involved in the addition of a carboxymethylaminomethyl (cmnm) group at the wobble position (U34) of certain tRNAs, forming tRNA-cmnm(5)s(2)U34. The protein is tRNA modification GTPase MnmE of Paracidovorax citrulli (strain AAC00-1) (Acidovorax citrulli).